The chain runs to 488 residues: Glutamyl-tRNA(Gln) amidotransferase subunit A (488 aa).

Active-site charge relay system residues include lysine 77 and serine 152. Residue serine 176 is the Acyl-ester intermediate of the active site.

This sequence belongs to the amidase family. GatA subfamily. In terms of assembly, heterotrimer of A, B and C subunits.

It carries out the reaction L-glutamyl-tRNA(Gln) + L-glutamine + ATP + H2O = L-glutaminyl-tRNA(Gln) + L-glutamate + ADP + phosphate + H(+). In terms of biological role, allows the formation of correctly charged Gln-tRNA(Gln) through the transamidation of misacylated Glu-tRNA(Gln) in organisms which lack glutaminyl-tRNA synthetase. The reaction takes place in the presence of glutamine and ATP through an activated gamma-phospho-Glu-tRNA(Gln). The sequence is that of Glutamyl-tRNA(Gln) amidotransferase subunit A from Streptococcus pyogenes serotype M12 (strain MGAS2096).